A 284-amino-acid chain; its full sequence is Phosphate import ATP-binding protein PstB 2 (284 aa).

Positions 1–22 (MTLLSTLRGISSPARQQPGTQS) are enriched in polar residues. The segment at 1-29 (MTLLSTLRGISSPARQQPGTQSESRRGGD) is disordered. An ABC transporter domain is found at 36-278 (LAVAGVSHGF…PDDARARKFI (243 aa)). An ATP-binding site is contributed by 68 to 75 (GPSGTGKT).

It belongs to the ABC transporter superfamily. Phosphate importer (TC 3.A.1.7) family. The complex is composed of two ATP-binding proteins (PstB), two transmembrane proteins (PstC and PstA) and a solute-binding protein (PstS).

The protein localises to the cell membrane. It catalyses the reaction phosphate(out) + ATP + H2O = ADP + 2 phosphate(in) + H(+). In terms of biological role, part of the ABC transporter complex PstSACB involved in phosphate import. Responsible for energy coupling to the transport system. The chain is Phosphate import ATP-binding protein PstB 2 from Natronomonas pharaonis (strain ATCC 35678 / DSM 2160 / CIP 103997 / JCM 8858 / NBRC 14720 / NCIMB 2260 / Gabara) (Halobacterium pharaonis).